Consider the following 423-residue polypeptide: Imidazolonepropionase (423 aa).

His78 and His80 together coordinate Fe(3+). Residues His78 and His80 each contribute to the Zn(2+) site. Residues Arg87, Tyr150, and His183 each contribute to the 4-imidazolone-5-propanoate site. Tyr150 is an N-formimidoyl-L-glutamate binding site. Position 247 (His247) interacts with Fe(3+). His247 provides a ligand contact to Zn(2+). Glu250 serves as a coordination point for 4-imidazolone-5-propanoate. Asp322 contacts Fe(3+). Asp322 lines the Zn(2+) pocket. N-formimidoyl-L-glutamate-binding residues include Asn324 and Gly326. Ser327 lines the 4-imidazolone-5-propanoate pocket.

Belongs to the metallo-dependent hydrolases superfamily. HutI family. Requires Zn(2+) as cofactor. The cofactor is Fe(3+).

The protein resides in the cytoplasm. It catalyses the reaction 4-imidazolone-5-propanoate + H2O = N-formimidoyl-L-glutamate. It participates in amino-acid degradation; L-histidine degradation into L-glutamate; N-formimidoyl-L-glutamate from L-histidine: step 3/3. Functionally, catalyzes the hydrolytic cleavage of the carbon-nitrogen bond in imidazolone-5-propanoate to yield N-formimidoyl-L-glutamate. It is the third step in the universal histidine degradation pathway. The protein is Imidazolonepropionase of Bacillus thuringiensis (strain Al Hakam).